A 247-amino-acid polypeptide reads, in one-letter code: Germin-like protein 9-1 (247 aa).

The first 25 residues, 1–25 (MMMSSRSSVSLGVLLLLAVILSAGA), serve as a signal peptide directing secretion. Positions 53–201 (KNLVTGNSGD…SMHTDQATVD (149 aa)) constitute a Cupin type-1 domain. 3 residues coordinate Mn(2+): His-100, His-102, and Glu-107. Asn-126 is a glycosylation site (N-linked (GlcNAc...) asparagine). His-148 provides a ligand contact to Mn(2+). Asn-153 is a glycosylation site (N-linked (GlcNAc...) asparagine).

This sequence belongs to the germin family. In terms of assembly, oligomer (believed to be a pentamer but probably hexamer).

It is found in the secreted. The protein localises to the extracellular space. Its subcellular location is the apoplast. Functionally, may play a role in plant defense. Probably has no oxalate oxidase activity even if the active site is conserved. The chain is Germin-like protein 9-1 from Oryza sativa subsp. japonica (Rice).